The following is an 85-amino-acid chain: Large ribosomal subunit protein bL27 (85 aa).

The interval 1–22 (MAHKKGQGSSRNGRDSPGQHRG) is disordered.

It belongs to the bacterial ribosomal protein bL27 family.

The polypeptide is Large ribosomal subunit protein bL27 (Anaeromyxobacter sp. (strain Fw109-5)).